A 125-amino-acid chain; its full sequence is MPTVQQLVRSARQKITTKTKSPALKSCPQRRGVCTRVYTTTPKKPNSALRKVARVRLTSGFEVTAYIPGIGHNLQEHSVVLVRGGKVKDLPGVRYHVVRGTLDTAGVKGRVNGRSKYGVKRPSDS.

It belongs to the universal ribosomal protein uS12 family. Part of the 30S ribosomal subunit.

It is found in the plastid. The protein resides in the chloroplast. Functionally, with S4 and S5 plays an important role in translational accuracy. Located at the interface of the 30S and 50S subunits. The chain is Small ribosomal subunit protein uS12c (rps12) from Oltmannsiellopsis viridis (Marine flagellate).